Here is a 194-residue protein sequence, read N- to C-terminus: NADPH-flavin oxidoreductase (194 aa).

Belongs to the non-flavoprotein flavin reductase family. As to quaternary structure, homodimer. It can form an isobutylamine N-hydroxylase two component enzyme system formed of a flavin reductase component (VlmR) and a monooxygenase component (VlmH).

The catalysed reaction is FADH2 + NADP(+) = FAD + NADPH + 2 H(+). It catalyses the reaction FMNH2 + NADP(+) = FMN + NADPH + 2 H(+). Functionally, involved in the biosynthesis of the azoxy antibiotic valanimycin, which has an antitumor activity. Catalyzes the reduction of FAD/FMN to FADH(2)/FMNH(2) which are subsequently used for the hydroxylation of isobutylamine by the isobutylamine N-hydroxylase VlmH. It can reduce either FAD or flavin mononucleotide (FMN) but prefers FAD. The enzyme has a strong preference for NADPH as acceptor. The chain is NADPH-flavin oxidoreductase from Streptomyces viridifaciens.